Reading from the N-terminus, the 106-residue chain is Guanylate cyclase activator 2B (106 aa).

The signal sequence occupies residues 1-21; that stretch reads MSRSQLWAAVVLLLLLQSAQG. Positions 22 to 91 are excised as a propeptide; it reads VYIKYHGFQV…STFKALRTIA (70 aa). 3 disulfide bridges follow: C62–C75, C95–C103, and C98–C106.

Belongs to the guanylin family. Localized predominantly in intestinal villi and the corticomedullary junction of the kidney.

The protein localises to the secreted. Its function is as follows. Endogenous activator of intestinal guanylate cyclase. It stimulates this enzyme through the same receptor binding region as the heat-stable enterotoxins. May be a potent physiological regulator of intestinal fluid and electrolyte transport. May be an autocrine/paracrine regulator of intestinal salt and water transport. This is Guanylate cyclase activator 2B (Guca2b) from Mus musculus (Mouse).